The following is a 299-amino-acid chain: Class II hydrophobin C (299 aa).

An N-terminal signal peptide occupies residues 1–17 (MKFLTVAAAIFASTSLA). N-linked (GlcNAc...) asparagine glycosylation is found at Asn39, Asn78, and Asn91. 4 disulfides stabilise this stretch: Cys232–Cys281, Cys242–Cys272, Cys243–Cys255, and Cys282–Cys293.

The protein belongs to the cerato-ulmin hydrophobin family.

The protein localises to the secreted. It localises to the cell wall. Its subcellular location is the vacuole. The protein resides in the cytoplasmic vesicle. Aerial growth, conidiation, and dispersal of filamentous fungi in the environment rely upon a capability of their secreting small amphipathic proteins called hydrophobins (HPBs) with low sequence identity. Class I can self-assemble into an outermost layer of rodlet bundles on aerial cell surfaces, conferring cellular hydrophobicity that supports fungal growth, development and dispersal; whereas Class II form highly ordered films at water-air interfaces through intermolecular interactions but contribute nothing to the rodlet structure. Hyd2C contributes to certain cell wall-related features, such as hydrophobicity but is not involved in cell wall-related events during fungal proliferation in host hemocoel. Does not contribute to conidial hydrophobicity. Involved actively in the asexual development. The sequence is that of Class II hydrophobin C from Beauveria bassiana (strain ARSEF 2860) (White muscardine disease fungus).